A 380-amino-acid chain; its full sequence is RNA-binding motif protein, Y chromosome (380 aa).

The RRM domain maps to 8–86; the sequence is GKIFIGGLNI…KRIKVKQARR (79 aa). 2 disordered regions span residues 82 to 226 and 279 to 358; these read KQAR…STSR and HEAP…YSAS. The segment covering 166–178 has biased composition (polar residues); it reads RSATSAQTRSNTG. Basic and acidic residues-rich tracts occupy residues 180–190 and 333–351; these read RGREPHRREIS and IDRE…HSPK.

Interacts with SRSF3/SRP20, SRSF9/SRP30, SRSF5/SRP40, and SRSF6/SRP55; this interaction inhibits SRSF family member pre-mRNA splicing. Interacts with splicing factor proteins and KHDRBS3. In terms of tissue distribution, testis-specific.

Its subcellular location is the nucleus. Functionally, RNA-binding protein involved in pre-mRNA splicing. Required for sperm development. Acts additively with TRA2B to promote exon 7 inclusion of the survival motor neuron SMN. Binds non-specifically to mRNAs. The polypeptide is RNA-binding motif protein, Y chromosome (Mus musculus (Mouse)).